The sequence spans 365 residues: Chorismate synthase (365 aa).

Arginine 46 contacts NADP(+). FMN is bound by residues 123–125, 241–242, glycine 281, 296–300, and arginine 322; these read RSS, NG, and KPTPS.

It belongs to the chorismate synthase family. In terms of assembly, homotetramer. Requires FMNH2 as cofactor.

It carries out the reaction 5-O-(1-carboxyvinyl)-3-phosphoshikimate = chorismate + phosphate. It participates in metabolic intermediate biosynthesis; chorismate biosynthesis; chorismate from D-erythrose 4-phosphate and phosphoenolpyruvate: step 7/7. Catalyzes the anti-1,4-elimination of the C-3 phosphate and the C-6 proR hydrogen from 5-enolpyruvylshikimate-3-phosphate (EPSP) to yield chorismate, which is the branch point compound that serves as the starting substrate for the three terminal pathways of aromatic amino acid biosynthesis. This reaction introduces a second double bond into the aromatic ring system. The protein is Chorismate synthase of Helicobacter pylori (strain HPAG1).